Here is a 237-residue protein sequence, read N- to C-terminus: tRNA1(Val) (adenine(37)-N6)-methyltransferase (237 aa).

The protein belongs to the methyltransferase superfamily. tRNA (adenine-N(6)-)-methyltransferase family.

The protein localises to the cytoplasm. The enzyme catalyses adenosine(37) in tRNA1(Val) + S-adenosyl-L-methionine = N(6)-methyladenosine(37) in tRNA1(Val) + S-adenosyl-L-homocysteine + H(+). Specifically methylates the adenine in position 37 of tRNA(1)(Val) (anticodon cmo5UAC). This chain is tRNA1(Val) (adenine(37)-N6)-methyltransferase, found in Pasteurella multocida (strain Pm70).